Reading from the N-terminus, the 330-residue chain is Phenylalanine--tRNA ligase alpha subunit (330 aa).

Residue E254 participates in Mg(2+) binding.

Belongs to the class-II aminoacyl-tRNA synthetase family. Phe-tRNA synthetase alpha subunit type 1 subfamily. Tetramer of two alpha and two beta subunits. Mg(2+) is required as a cofactor.

The protein resides in the cytoplasm. It carries out the reaction tRNA(Phe) + L-phenylalanine + ATP = L-phenylalanyl-tRNA(Phe) + AMP + diphosphate + H(+). The chain is Phenylalanine--tRNA ligase alpha subunit (pheS) from Neisseria meningitidis serogroup A / serotype 4A (strain DSM 15465 / Z2491).